Consider the following 457-residue polypeptide: Adenylosuccinate synthetase isozyme 2 B (457 aa).

GTP contacts are provided by residues 40 to 46 (GDEGKGK) and 68 to 70 (GHT). The active-site Proton acceptor is aspartate 41. Aspartate 41 and glycine 68 together coordinate Mg(2+). Substrate is bound at residue aspartate 41. IMP is bound by residues 41 to 44 (DEGK), 66 to 69 (NAGH), threonine 163, arginine 177, asparagine 256, threonine 271, and arginine 335. Histidine 69 (proton donor) is an active-site residue. 331-337 (VTTGRKR) serves as a coordination point for substrate. Residues arginine 337, 363–365 (KLD), and 445–448 (GVGK) each bind GTP.

The protein belongs to the adenylosuccinate synthetase family. In terms of assembly, homodimer. Mg(2+) is required as a cofactor.

It localises to the cytoplasm. The protein localises to the mitochondrion. The enzyme catalyses IMP + L-aspartate + GTP = N(6)-(1,2-dicarboxyethyl)-AMP + GDP + phosphate + 2 H(+). It functions in the pathway purine metabolism; AMP biosynthesis via de novo pathway; AMP from IMP: step 1/2. Inhibited competitively by AMP and IMP and non-competitively by fructose 1,6-bisphosphate. Plays an important role in the de novo pathway and in the salvage pathway of purine nucleotide biosynthesis. Catalyzes the first committed step in the biosynthesis of AMP from IMP. The sequence is that of Adenylosuccinate synthetase isozyme 2 B (adss2-b) from Xenopus tropicalis (Western clawed frog).